We begin with the raw amino-acid sequence, 165 residues long: DELTA-actitoxin-Oor1a (165 aa).

Residues 1 to 17 form an N-terminal region region; sequence ATFRVLAKVLAELGKVS. The phosphocholine site is built by Ser-41, Val-74, Ser-92, Pro-94, and Tyr-125. The segment at 92-107 is trp-rich region, which is important for the binding to lipid membrane; it reads SVPYDYNLYSNWWNVK.

This sequence belongs to the actinoporin family. Sea anemone subfamily. In terms of assembly, octamer or nonamer in membranes. Monomer in the soluble state.

The protein localises to the secreted. It is found in the nematocyst. It localises to the target cell membrane. Pore-forming protein that forms cations-selective hydrophilic pores of around 1 nm and causes cardiac stimulation and cytolysis. Pore formation is a multi-step process that involves specific recognition of membrane sphingomyelin (but neither cholesterol nor phosphatidylcholine) using aromatic rich region and adjacent phosphocholine (POC) binding site, firm binding to the membrane (mainly driven by hydrophobic interactions) accompanied by the transfer of the N-terminal region to the lipid-water interface and finally pore formation after oligomerization of monomers. Cytolytic effects include red blood cells hemolysis, platelet aggregation and lysis, cytotoxic and cytostatic effects on fibroblasts. Lethality in mammals has been ascribed to severe vasospasm of coronary vessels, cardiac arrhythmia, and inotropic effects. The protein is DELTA-actitoxin-Oor1a of Oulactis orientalis (Japan anemone).